A 184-amino-acid polypeptide reads, in one-letter code: Ras-related protein Rap-1b-like protein (184 aa).

10 to 18 (GSRGVGKSA) provides a ligand contact to GTP. Residues 32 to 40 (YDPTIEDSY) carry the Effector region motif. GTP-binding positions include 57-61 (DTAGT), 116-119 (NKCD), and 147-149 (SAK). A lipid anchor (S-geranylgeranyl cysteine) is attached at cysteine 181. Positions 182-184 (QLL) are cleaved as a propeptide — removed in mature form.

The protein belongs to the small GTPase superfamily. Ras family.

The protein localises to the cell membrane. The protein resides in the cytoplasm. Its subcellular location is the cytosol. It catalyses the reaction GTP + H2O = GDP + phosphate + H(+). Functionally, probable GTP-binding protein with intrinsic GTPase activity. The protein is Ras-related protein Rap-1b-like protein of Homo sapiens (Human).